The primary structure comprises 177 residues: Interleukin-1 receptor antagonist protein (177 aa).

The signal sequence occupies residues 1–25; the sequence is MEIRRRSVRHLISLLLFLFYSETAC. C91 and C141 are oxidised to a cystine. N109 carries N-linked (GlcNAc...) asparagine glycosylation.

This sequence belongs to the IL-1 family.

The protein localises to the secreted. Functionally, anti-inflammatory antagonist of interleukin-1 family of proinflammatory cytokines such as interleukin-1beta/IL1B and interleukin-1alpha/IL1A. Protects from immune dysregulation and uncontrolled systemic inflammation triggered by IL1 for a range of innate stimulatory agents such as pathogens. This chain is Interleukin-1 receptor antagonist protein (IL1RN), found in Equus caballus (Horse).